A 399-amino-acid polypeptide reads, in one-letter code: 1-deoxy-D-xylulose 5-phosphate reductoisomerase (399 aa).

5 residues coordinate NADPH: threonine 10, glycine 11, serine 12, isoleucine 13, and asparagine 124. Residue lysine 125 participates in 1-deoxy-D-xylulose 5-phosphate binding. Glutamate 126 contributes to the NADPH binding site. Aspartate 150 contacts Mn(2+). Residues serine 151, glutamate 152, serine 186, and histidine 209 each coordinate 1-deoxy-D-xylulose 5-phosphate. Residue glutamate 152 participates in Mn(2+) binding. Residue glycine 215 coordinates NADPH. 1-deoxy-D-xylulose 5-phosphate-binding residues include serine 222, asparagine 227, lysine 228, and glutamate 231. Residue glutamate 231 participates in Mn(2+) binding.

This sequence belongs to the DXR family. Mg(2+) serves as cofactor. It depends on Mn(2+) as a cofactor.

The enzyme catalyses 2-C-methyl-D-erythritol 4-phosphate + NADP(+) = 1-deoxy-D-xylulose 5-phosphate + NADPH + H(+). Its pathway is isoprenoid biosynthesis; isopentenyl diphosphate biosynthesis via DXP pathway; isopentenyl diphosphate from 1-deoxy-D-xylulose 5-phosphate: step 1/6. Catalyzes the NADPH-dependent rearrangement and reduction of 1-deoxy-D-xylulose-5-phosphate (DXP) to 2-C-methyl-D-erythritol 4-phosphate (MEP). The chain is 1-deoxy-D-xylulose 5-phosphate reductoisomerase from Psychromonas ingrahamii (strain DSM 17664 / CCUG 51855 / 37).